Here is a 245-residue protein sequence, read N- to C-terminus: Dehydrogenase/reductase SDR family member 6 (245 aa).

Residues Gln-16–Ile-18, Asp-37, and Asp-58 each bind NAD(+). Arg-144 contacts substrate. Tyr-147 (proton acceptor) is an active-site residue. NAD(+) contacts are provided by residues Lys-151 and Val-180–Ser-184. 2 residues coordinate substrate: Arg-188 and Arg-205.

Belongs to the short-chain dehydrogenases/reductases (SDR) family. As to quaternary structure, homotetramer. Detected in liver (at protein level).

It is found in the cytoplasm. It catalyses the reaction cis-4-hydroxy-L-proline + NAD(+) = 4-oxo-L-proline + NADH + H(+). It carries out the reaction (R)-3-hydroxybutanoate + NAD(+) = acetoacetate + NADH + H(+). The protein operates within amino-acid metabolism. Its pathway is siderophore biosynthesis. Its function is as follows. NAD(H)-dependent dehydrogenase/reductase with a preference for cyclic substrates. Catalyzes stereoselective conversion of 4-oxo-L-proline to cis-4-hydroxy-L-proline, likely a detoxification mechanism for ketoprolines. Mediates the formation of 2,5-dihydroxybenzoate (2,5-DHBA), a siderophore that chelates free cytoplasmic iron and associates with LCN2, thereby regulating iron transport and homeostasis while protecting cells against free radical-induced oxidative stress. The iron-siderophore complex is imported into mitochondria, providing an iron source for mitochondrial metabolic processes in particular heme synthesis. May act as a 3-hydroxybutyrate dehydrogenase. This chain is Dehydrogenase/reductase SDR family member 6, found in Homo sapiens (Human).